A 274-amino-acid polypeptide reads, in one-letter code: MFRLLLLALSCLESTVFMASVSISRSKPVGIVGGQRTPPGKWPWQVSLRMYSYEVNSWVHICGGSIIHPQWILTAAHCIQSQDADPAVYRVQVGEVYLYKEQELLNISRIIIHPDYNDVSKRFDLALMQLTALLVTSTNVSPVSLPKDSSTFDSTDQCWLVGWGNLLQRVPLQPPYQLHEVKIPIQDNKSCKRAYRKKSSDEHKAVAIFDDMLCAGTSGRGPCFGDSGGPLVCWKSNKWIQVGVVSKGIDCSNNLPSIFSRVQSSLAWIHQHIQ.

Residues 1 to 26 form the signal peptide; sequence MFRLLLLALSCLESTVFMASVSISRS. Positions 31 to 274 constitute a Peptidase S1 domain; that stretch reads IVGGQRTPPG…SLAWIHQHIQ (244 aa). A disulfide bond links Cys-62 and Cys-78. His-77 functions as the Charge relay system in the catalytic mechanism. Residue Asn-106 is glycosylated (N-linked (GlcNAc...) asparagine). Asp-124 serves as the catalytic Charge relay system. 3 cysteine pairs are disulfide-bonded: Cys-158–Cys-233, Cys-191–Cys-214, and Cys-223–Cys-251. Residue Ser-227 is the Charge relay system of the active site.

This sequence belongs to the peptidase S1 family. In terms of assembly, homooligomer, heterodimer and heterotetramer. Able to form homo- and hetero- tetrameric structures. Heterotetramer is far more stable than the homotetramer. Expressed in embryos throughout the preimplantation period, during blastocyst hatching and embryo outgrowth. Found in uterus especially in glandular epithelium.

It localises to the secreted. Inhibited by benzamidine, (4-amidino-phenyl)-methane-sulfonyl (APMSF), N-p-tosyl-L-lysine chloromethylketone (TLCK), gabexate, mesylate, BABIM and trypsin soybean inhibitor (TSI). Involved in embryo hatching and implantation. The sequence is that of Serine protease 28 (Prss28) from Mus musculus (Mouse).